The sequence spans 306 residues: Mycothiol acetyltransferase (306 aa).

2 consecutive N-acetyltransferase domains span residues 5-157 and 159-306; these read EIYE…EPAA and ITIR…HKKL. A 1D-myo-inositol 2-(L-cysteinylamino)-2-deoxy-alpha-D-glucopyranoside-binding site is contributed by glutamate 36. Position 82-84 (82-84) interacts with acetyl-CoA; it reads MLV. Positions 186, 227, and 238 each coordinate 1D-myo-inositol 2-(L-cysteinylamino)-2-deoxy-alpha-D-glucopyranoside. Position 242–244 (242–244) interacts with acetyl-CoA; it reads LGV. Tyrosine 276 lines the 1D-myo-inositol 2-(L-cysteinylamino)-2-deoxy-alpha-D-glucopyranoside pocket. Position 281–286 (281–286) interacts with acetyl-CoA; sequence NVRAVR.

It belongs to the acetyltransferase family. MshD subfamily. As to quaternary structure, monomer.

The enzyme catalyses 1D-myo-inositol 2-(L-cysteinylamino)-2-deoxy-alpha-D-glucopyranoside + acetyl-CoA = mycothiol + CoA + H(+). Catalyzes the transfer of acetyl from acetyl-CoA to desacetylmycothiol (Cys-GlcN-Ins) to form mycothiol. In Stackebrandtia nassauensis (strain DSM 44728 / CIP 108903 / NRRL B-16338 / NBRC 102104 / LLR-40K-21), this protein is Mycothiol acetyltransferase.